A 669-amino-acid polypeptide reads, in one-letter code: DNA ligase (669 aa).

NAD(+)-binding positions include 34 to 38 (DAEYD), 83 to 84 (SL), and Glu113. Lys115 serves as the catalytic N6-AMP-lysine intermediate. The NAD(+) site is built by Arg136, Glu170, Lys286, and Lys310. Zn(2+) contacts are provided by Cys404, Cys407, Cys422, and Cys427. In terms of domain architecture, BRCT spans 591–669 (IADSPFAGKT…EEALVKAISH (79 aa)).

The protein belongs to the NAD-dependent DNA ligase family. LigA subfamily. The cofactor is Mg(2+). Mn(2+) serves as cofactor.

It carries out the reaction NAD(+) + (deoxyribonucleotide)n-3'-hydroxyl + 5'-phospho-(deoxyribonucleotide)m = (deoxyribonucleotide)n+m + AMP + beta-nicotinamide D-nucleotide.. Functionally, DNA ligase that catalyzes the formation of phosphodiester linkages between 5'-phosphoryl and 3'-hydroxyl groups in double-stranded DNA using NAD as a coenzyme and as the energy source for the reaction. It is essential for DNA replication and repair of damaged DNA. The protein is DNA ligase of Halalkalibacterium halodurans (strain ATCC BAA-125 / DSM 18197 / FERM 7344 / JCM 9153 / C-125) (Bacillus halodurans).